The sequence spans 126 residues: Histone H2B 1.1 (126 aa).

A compositionally biased stretch (low complexity) spans 1-12 (MPEPAKSAPAPK). A disordered region spans residues 1–35 (MPEPAKSAPAPKKGSKKAVTKTQKKDGKKRRKSRK). 2 positions are modified to N6-acetyllysine: lysine 6 and lysine 13. Residue serine 15 is modified to Phosphoserine. An N6-acetyllysine mark is found at lysine 16 and lysine 21. O-linked (GlcNAc) serine glycosylation is present at serine 113. Lysine 121 is covalently cross-linked (Glycyl lysine isopeptide (Lys-Gly) (interchain with G-Cter in ubiquitin)).

Belongs to the histone H2B family. As to quaternary structure, the nucleosome is a histone octamer containing two molecules each of H2A, H2B, H3 and H4 assembled in one H3-H4 heterotetramer and two H2A-H2B heterodimers. The octamer wraps approximately 147 bp of DNA. Monoubiquitination of Lys-121 by BRE1 gives a specific tag for epigenetic transcriptional activation and is also prerequisite for histone H3 'Lys-4' and 'Lys-79' methylation. In terms of processing, phosphorylated on Ser-15 during developmentally programmed apoptosis; which may facilitate apoptotic chromatin condensation. Post-translationally, glcNAcylation at Ser-113 promotes monoubiquitination of Lys-121. It fluctuates in response to extracellular glucose, and associates with transcribed genes.

Its subcellular location is the nucleus. The protein resides in the chromosome. Functionally, core component of nucleosome. Nucleosomes wrap and compact DNA into chromatin, limiting DNA accessibility to the cellular machineries which require DNA as a template. Histones thereby play a central role in transcription regulation, DNA repair, DNA replication and chromosomal stability. DNA accessibility is regulated via a complex set of post-translational modifications of histones, also called histone code, and nucleosome remodeling. The protein is Histone H2B 1.1 of Xenopus laevis (African clawed frog).